The primary structure comprises 157 residues: Transcription elongation factor GreA (157 aa).

The protein belongs to the GreA/GreB family.

In terms of biological role, necessary for efficient RNA polymerase transcription elongation past template-encoded arresting sites. The arresting sites in DNA have the property of trapping a certain fraction of elongating RNA polymerases that pass through, resulting in locked ternary complexes. Cleavage of the nascent transcript by cleavage factors such as GreA or GreB allows the resumption of elongation from the new 3'terminus. GreA releases sequences of 2 to 3 nucleotides. This is Transcription elongation factor GreA from Azorhizobium caulinodans (strain ATCC 43989 / DSM 5975 / JCM 20966 / LMG 6465 / NBRC 14845 / NCIMB 13405 / ORS 571).